The primary structure comprises 398 residues: MNPTLPTDSPLLSRSMIAVICAQFLSAFGDNALLFATLALIKQQLYPDWSQPILQMAFVATYIILAPFVGQVADSFAKGRVMMVANGLKLAGALVICFGFNPFLGYTLVGVGAAAYSPAKYGILGEITSGEKLVKANGLMEASTIAAILIGSVAGGILADWHIVAALAVCAVVYAAAVIANLYIPRLPAAHPAVSWTPRAMTQAFFNACVVLWRDGQTRFSLIGTSLFWGAGVTLRFLLVLWVPVALGIADNATPTLLNAMVAVGIVIGAGAAARFVTLETVRRCMPAGILIGVAVAIFALQTTLFNAYALLLIIGVLGGFFVVPLNALLQERGKNSVGAGNAIAVQNLGENTAMLLMLGLYSLAVKVSVPVVGVGIGFGVVFALAISALWLSQRRAK.

12 helical membrane-spanning segments follow: residues 16-36 (MIAV…LLFA), 53-73 (ILQM…GQVA), 91-111 (AGAL…LVGV), 139-159 (LMEA…GILA), 163-183 (IVAA…ANLY), 195-213 (SWTP…VVLW), 227-247 (LFWG…PVAL), 253-273 (ATPT…AGAA), 286-306 (MPAG…TTLF), 310-330 (ALLL…NALL), 344-364 (IAVQ…LYSL), and 372-392 (VVGV…ALWL).

This sequence belongs to the major facilitator superfamily. LplT (TC 2.A.1.42) family.

It is found in the cell inner membrane. Catalyzes the facilitated diffusion of 2-acyl-glycero-3-phosphoethanolamine (2-acyl-GPE) into the cell. The polypeptide is Lysophospholipid transporter LplT (Serratia proteamaculans (strain 568)).